Here is an 842-residue protein sequence, read N- to C-terminus: Protein translocase subunit SecA (842 aa).

ATP is bound by residues glutamine 85, 103–107 (GEGKT), and aspartate 493. 4 residues coordinate Zn(2+): cysteine 825, cysteine 827, cysteine 836, and histidine 837.

The protein belongs to the SecA family. As to quaternary structure, monomer and homodimer. Part of the essential Sec protein translocation apparatus which comprises SecA, SecYEG and auxiliary proteins SecDF. Other proteins may also be involved. Zn(2+) serves as cofactor.

It localises to the cell membrane. The protein localises to the cytoplasm. It carries out the reaction ATP + H2O + cellular proteinSide 1 = ADP + phosphate + cellular proteinSide 2.. Functionally, part of the Sec protein translocase complex. Interacts with the SecYEG preprotein conducting channel. Has a central role in coupling the hydrolysis of ATP to the transfer of proteins into and across the cell membrane, serving as an ATP-driven molecular motor driving the stepwise translocation of polypeptide chains across the membrane. In Streptococcus equi subsp. zooepidemicus (strain H70), this protein is Protein translocase subunit SecA.